A 651-amino-acid polypeptide reads, in one-letter code: L-aspartate oxidase, chloroplastic (651 aa).

Residues 1–74 constitute a chloroplast transit peptide; that stretch reads MAAHVSTGNI…PISETSKPIR (74 aa). Residues 92 to 95, Lys114, 121 to 128, and Asp292 each bind FAD; these read SGVA and NTNYAQGG. The active-site Proton donor/acceptor is Arg368. FAD-binding positions include Glu453 and 469 to 470; that span reads SL.

Belongs to the FAD-dependent oxidoreductase 2 family. NadB subfamily. Interacts in vitro with QS. It depends on FAD as a cofactor.

The protein resides in the plastid. It is found in the chloroplast. The catalysed reaction is L-aspartate + O2 = iminosuccinate + H2O2. It functions in the pathway cofactor biosynthesis; NAD(+) biosynthesis; iminoaspartate from L-aspartate (oxidase route): step 1/1. In terms of biological role, catalyzes the oxidation of L-aspartate to iminoaspartate. Can complement nadB-deficient E.coli mutant. Plays a role in stomatal immunity. This chain is L-aspartate oxidase, chloroplastic, found in Arabidopsis thaliana (Mouse-ear cress).